Here is a 28-residue protein sequence, read N- to C-terminus: M-poneritoxin-Da4b (28 aa).

Ala28 bears the Alanine amide mark.

In terms of tissue distribution, expressed by the venom gland.

The protein localises to the secreted. Its function is as follows. The synthetic peptide has antimicrobial activity against the Gram-positive bacteria B.amyloliquefacies S499 (MIC=0.05 mM), L.monocytogenes 2231 and S.aureus ATCC 29213, against the Gram-negative bacteria P.putida BTP1, P.aeruginosa PaO1 and E.coli ATCC 10536, and against the fungi S.cerevisiae, R.mucilaginosa and C.cucumerinum. It is not active against the fungi F.oxysporum and B.cinerea. The polypeptide is M-poneritoxin-Da4b (Dinoponera australis (Giant neotropical hunting ant)).